The sequence spans 193 residues: uncharacterized protein (193 aa).

Helical transmembrane passes span 8-28, 46-66, 82-102, and 141-161; these read GVLVGGLWAWIAPPIHAVVAI, FFIAPFMLLGLLSVLAVVASA, GLSIGLTTAAAIAAGVGALVV, and IALTLMWPAGIASLVYALLAA.

It to M.leprae ML1222.

It is found in the cell membrane. This is an uncharacterized protein from Mycobacterium tuberculosis (strain CDC 1551 / Oshkosh).